A 398-amino-acid chain; its full sequence is uncharacterized protein (398 aa).

6 helical membrane-spanning segments follow: residues 37–57 (LVILTIVAFFWGLLGVIFVQF), 92–112 (IFNAIFWLTQILFNVPFFIFG), 122–142 (LLTLYFVAVSNLFGFFFSYIP), 186–206 (LFYGLIWGFLQAVFYSVILII), 228–248 (IGGILMLINTVSFIIGYVIGT), and 268–288 (FGVAFFLSPNLVFTLLMNIVL).

The protein localises to the cell membrane. This is an uncharacterized protein from Mycoplasma genitalium (strain ATCC 33530 / DSM 19775 / NCTC 10195 / G37) (Mycoplasmoides genitalium).